The primary structure comprises 602 residues: Glutathione-regulated potassium-efflux system protein KefB (602 aa).

13 consecutive transmembrane segments (helical) span residues 4–24, 29–49, 55–75, 87–107, 115–135, 152–172, 181–201, 207–227, 230–250, 261–281, 296–318, 326–346, and 356–376; these read TGLLTAVLVFLFAAVVAVPIA, IGAVLGYLIAGIAIGPWGLGF, EILHFSELGVVFLMFIIGLEL, IFGVGAGQVVITAAVLGALLY, AAVIGGVGLAMSSTAMALQLM, VLLFQDMAVIPALALIPILAG, VKIGLKIAAFAGMLIGGRYLL, YIVASGVREVFTAAALLVVLG, LFMDALGLSMALGTFIAGILL, IAIEPFKGLLLGLFFISVGMA, LGVLALVFIKSAILYGLARVFGL, FAGVLSQGGEFAFVLFSAAFS, and ALLLVVVTLSMMTTPLLMQVI. Positions 400 to 519 constitute an RCK N-terminal domain; that stretch reads DPQVIIVGFG…NGVKDFTRET (120 aa).

This sequence belongs to the monovalent cation:proton antiporter 2 (CPA2) transporter (TC 2.A.37) family. KefB subfamily. In terms of assembly, interacts with the regulatory subunit KefG.

It is found in the cell inner membrane. Pore-forming subunit of a potassium efflux system that confers protection against electrophiles. Catalyzes K(+)/H(+) antiport. The protein is Glutathione-regulated potassium-efflux system protein KefB of Yersinia pestis bv. Antiqua (strain Antiqua).